The primary structure comprises 351 residues: Dihydroorotate dehydrogenase (quinone) (351 aa).

Residues 67-71 (AGFDK) and Thr91 each bind FMN. A substrate-binding site is contributed by Lys71. Residue 116-120 (NAMGF) coordinates substrate. 2 residues coordinate FMN: Asn145 and Asn178. Asn178 is a substrate binding site. Ser181 functions as the Nucleophile in the catalytic mechanism. Asn183 provides a ligand contact to substrate. FMN-binding residues include Lys214 and Thr242. Residue 243-244 (NT) coordinates substrate. Residues Gly262, Gly291, and 312–313 (YS) each bind FMN.

Belongs to the dihydroorotate dehydrogenase family. Type 2 subfamily. Monomer. The cofactor is FMN.

Its subcellular location is the cell membrane. The enzyme catalyses (S)-dihydroorotate + a quinone = orotate + a quinol. It functions in the pathway pyrimidine metabolism; UMP biosynthesis via de novo pathway; orotate from (S)-dihydroorotate (quinone route): step 1/1. In terms of biological role, catalyzes the conversion of dihydroorotate to orotate with quinone as electron acceptor. In Helicobacter pylori (strain HPAG1), this protein is Dihydroorotate dehydrogenase (quinone).